A 356-amino-acid polypeptide reads, in one-letter code: tRNA-specific 2-thiouridylase MnmA (356 aa).

Residues 8–15 (GMSGGVDS) and M34 contribute to the ATP site. The active-site Nucleophile is the C103. An intrachain disulfide couples C103 to C199. Position 127 (G127) interacts with ATP. The interaction with tRNA stretch occupies residues 149-151 (KDQ). C199 (cysteine persulfide intermediate) is an active-site residue. Positions 305–306 (RY) are interaction with tRNA.

It belongs to the MnmA/TRMU family.

It is found in the cytoplasm. It carries out the reaction S-sulfanyl-L-cysteinyl-[protein] + uridine(34) in tRNA + AH2 + ATP = 2-thiouridine(34) in tRNA + L-cysteinyl-[protein] + A + AMP + diphosphate + H(+). Catalyzes the 2-thiolation of uridine at the wobble position (U34) of tRNA, leading to the formation of s(2)U34. The protein is tRNA-specific 2-thiouridylase MnmA of Clostridium kluyveri (strain ATCC 8527 / DSM 555 / NBRC 12016 / NCIMB 10680 / K1).